The chain runs to 178 residues: Large ribosomal subunit protein uL6 (178 aa).

This sequence belongs to the universal ribosomal protein uL6 family. In terms of assembly, part of the 50S ribosomal subunit.

Its function is as follows. This protein binds to the 23S rRNA, and is important in its secondary structure. It is located near the subunit interface in the base of the L7/L12 stalk, and near the tRNA binding site of the peptidyltransferase center. This is Large ribosomal subunit protein uL6 from Halobacterium salinarum (strain ATCC 700922 / JCM 11081 / NRC-1) (Halobacterium halobium).